We begin with the raw amino-acid sequence, 382 residues long: Alkanesulfonate monooxygenase (382 aa).

It belongs to the SsuD family. Homotetramer.

It catalyses the reaction an alkanesulfonate + FMNH2 + O2 = an aldehyde + FMN + sulfite + H2O + 2 H(+). Catalyzes the desulfonation of aliphatic sulfonates. The polypeptide is Alkanesulfonate monooxygenase (Yersinia pestis bv. Antiqua (strain Antiqua)).